The chain runs to 156 residues: Small ribosomal subunit protein uS7 (156 aa).

Belongs to the universal ribosomal protein uS7 family. As to quaternary structure, part of the 30S ribosomal subunit. Contacts proteins S9 and S11.

Functionally, one of the primary rRNA binding proteins, it binds directly to 16S rRNA where it nucleates assembly of the head domain of the 30S subunit. Is located at the subunit interface close to the decoding center, probably blocks exit of the E-site tRNA. The protein is Small ribosomal subunit protein uS7 of Nitrobacter winogradskyi (strain ATCC 25391 / DSM 10237 / CIP 104748 / NCIMB 11846 / Nb-255).